Here is a 470-residue protein sequence, read N- to C-terminus: Cholesterol 7-desaturase nvd 1 (470 aa).

A helical membrane pass occupies residues 67–87; that stretch reads LALCIAGFSVLMYFLYVLVFV. Residues 136 to 238 form the Rieske domain; sequence FRLVDSQQLE…CREVNKAIFV (103 aa). Residues Cys-176, His-178, Cys-196, and His-199 each coordinate [2Fe-2S] cluster.

Belongs to the cholesterol 7-desaturase family. Requires [2Fe-2S] cluster as cofactor.

It is found in the membrane. The catalysed reaction is cholesterol + NADPH + O2 + H(+) = 7-dehydrocholesterol + NADP(+) + 2 H2O. It carries out the reaction cholesterol + NADH + O2 + H(+) = 7-dehydrocholesterol + NAD(+) + 2 H2O. Its pathway is steroid hormone biosynthesis; dafachronic acid biosynthesis. Functionally, catalyzes the production of 7-dehydrocholesterol (7-DHC or cholesta-5,7-dien-3beta-ol) by inserting a double bond (desaturating) at the C7-C8 single bond of cholesterol. Essential regulator of steroid biosynthesis as this reaction is the first step in the synthesis of the steroid hormone Delta(7)-dafachronic acid. The sequence is that of Cholesterol 7-desaturase nvd 1 from Ciona intestinalis (Transparent sea squirt).